The primary structure comprises 469 residues: Trigger factor (469 aa).

The PPIase FKBP-type domain maps to 162-243; that stretch reads GDFVSIDLSA…VKSVKERELP (82 aa). The disordered stretch occupies residues 429 to 469; that stretch reads NTIDTSEFFGKHAQSDKADQKTEEADPNSDAIDEEVDEAAE. The span at 437 to 452 shows a compositional bias: basic and acidic residues; sequence FGKHAQSDKADQKTEE. The span at 453–469 shows a compositional bias: acidic residues; that stretch reads ADPNSDAIDEEVDEAAE.

This sequence belongs to the FKBP-type PPIase family. Tig subfamily.

The protein resides in the cytoplasm. The enzyme catalyses [protein]-peptidylproline (omega=180) = [protein]-peptidylproline (omega=0). Involved in protein export. Acts as a chaperone by maintaining the newly synthesized protein in an open conformation. Functions as a peptidyl-prolyl cis-trans isomerase. The polypeptide is Trigger factor (Mycobacterium leprae (strain Br4923)).